The primary structure comprises 649 residues: Stress-70 protein, mitochondrial (649 aa).

Residues Met1–Tyr46 constitute a mitochondrion transit peptide. The segment at Met1–Val432 is interaction with NFS1. ADP-binding residues include Thr63 and Asn64. Residues Thr63 to Asp431 are nucleotide-binding domain (NBD). An N6-acetyllysine modification is found at Lys76. Thr87 carries the post-translational modification Phosphothreonine. N6-acetyllysine; alternate is present on residues Lys135 and Lys138. N6-succinyllysine; alternate occurs at positions 135 and 138. N6-acetyllysine is present on Lys143. Lys206 is modified (N6-acetyllysine; alternate). Position 206 is an N6-succinyllysine; alternate (Lys206). At Lys206 the chain carries N6-malonyllysine; alternate. Residues Lys234 and Lys288 each carry the N6-acetyllysine modification. The residue at position 300 (Lys300) is an N6-acetyllysine; alternate. Residue Lys300 is modified to N6-succinyllysine; alternate. Glu313, Lys316, and Ser320 together coordinate ADP. Position 368 is an N6-succinyllysine (Lys368). 2 residues coordinate ADP: Gly388 and Arg391. Lys394 carries the N6-succinyllysine modification. Ser408 carries the phosphoserine modification. Positions Val432–Thr441 are interdomain linker. N6-acetyllysine; alternate is present on residues Lys565, Lys598, and Lys638. N6-succinyllysine; alternate occurs at positions 565, 598, and 638.

The protein belongs to the heat shock protein 70 family. In terms of assembly, interacts strongly with the intermediate form of FXN and weakly with its mature form. Interacts with HSCB. Associates with the mitochondrial contact site and cristae organizing system (MICOS) complex, composed of at least MICOS10/MIC10, CHCHD3/MIC19, CHCHD6/MIC25, APOOL/MIC27, IMMT/MIC60, APOO/MIC23/MIC26 and QIL1/MIC13. This complex was also known under the names MINOS or MitOS complex. The MICOS complex associates with mitochondrial outer membrane proteins SAMM50, MTX1, MTX2 and DNAJC11, mitochondrial inner membrane protein TMEM11 and with HSPA9. Interacts with DNLZ, the interaction is required to prevent self-aggregation. Interacts with TESPA1. Interacts with PDPN. Interacts with NFU1, NFS1 and ISCU. Interacts with TP53; the interaction promotes TP53 degradation. Interacts (via SBD domain) with UBXN2A; the interaction with UBXN2A inhibits HSPA9/MOT-2 interaction with and degradation of TP53, thereby promotes TP53 translocation to the nucleus. Interacts with ITPR1 AND VDAC1; this interaction couples ITPR1 to VDAC1. Component of the TIM23 mitochondrial inner membrane pre-sequence translocase complex.

It is found in the mitochondrion. The protein localises to the nucleus. It localises to the nucleolus. The protein resides in the cytoplasm. Its subcellular location is the mitochondrion matrix. The enzyme catalyses ATP + H2O = ADP + phosphate + H(+). The chaperone activity is regulated by ATP-induced allosteric coupling of the nucleotide-binding (NBD) and substrate-binding (SBD) domains. ATP binding in the NBD leads to a conformational change in the NBD, which is transferred through the interdomain linker (IDL) to the substrate-binding domain (SBD). This elicits a reduced substrate affinity and a faster substrate exchange rate. Upon hydrolysis of ATP to ADP, the protein undergoes a conformational change that increases its affinity for substrate proteins. It cycles through repeated phases of ATP hydrolysis and nucleotide exchange, facilitating repeated cycles of substrate binding and release. Functions in collaboration with co-chaperones. Functions with the co-chaperone, DNLZ, to maintain solubility and regulate ATP hydrolysis. Nucleotide exchange factors, GRPEL1 and GRPEL2, accelerate nucleotide exchange. Its function is as follows. Mitochondrial chaperone that plays a key role in mitochondrial protein import, folding, and assembly. Plays an essential role in the protein quality control system, the correct folding of proteins, the re-folding of misfolded proteins, and the targeting of proteins for subsequent degradation. These processes are achieved through cycles of ATP binding, ATP hydrolysis, and ADP release, mediated by co-chaperones. In mitochondria, it associates with the TIM (translocase of the inner membrane) protein complex to assist in the import and folding of mitochondrial proteins. Plays an important role in mitochondrial iron-sulfur cluster (ISC) biogenesis, interacts with and stabilizes ISC cluster assembly proteins FXN, NFU1, NFS1 and ISCU. Regulates erythropoiesis via stabilization of ISC assembly. Regulates mitochondrial calcium-dependent apoptosis by coupling two calcium channels, ITPR1 and VDAC1, at the mitochondria-associated endoplasmic reticulum (ER) membrane to facilitate calcium transport from the ER lumen to the mitochondria intermembrane space, providing calcium for the downstream calcium channel MCU, which releases it into the mitochondrial matrix. Although primarily located in the mitochondria, it is also found in other cellular compartments. In the cytosol, it associates with proteins involved in signaling, apoptosis, or senescence. It may play a role in cell cycle regulation via its interaction with and promotion of degradation of TP53. May play a role in the control of cell proliferation and cellular aging. Protects against reactive oxygen species (ROS). Extracellular HSPA9 plays a cytoprotective role by preventing cell lysis following immune attack by the membrane attack complex by disrupting formation of the complex. This chain is Stress-70 protein, mitochondrial, found in Canis lupus familiaris (Dog).